An 859-amino-acid polypeptide reads, in one-letter code: Linoleate 9S-lipoxygenase B (859 aa).

A PLAT domain is found at I34–A158. In terms of domain architecture, Lipoxygenase spans A161 to I859. Positions E213 to S246 are disordered. The span at T233–C244 shows a compositional bias: basic and acidic residues. Fe cation is bound by residues H521, H526, H711, and I859.

The protein belongs to the lipoxygenase family. As to quaternary structure, monomer. Requires Fe cation as cofactor. As to expression, fruit specific.

The protein localises to the cytoplasm. It carries out the reaction (9Z,12Z)-octadecadienoate + O2 = (9S)-hydroperoxy-(10E,12Z)-octadecadienoate. It functions in the pathway lipid metabolism; oxylipin biosynthesis. In terms of biological role, plant lipoxygenase may be involved in a number of diverse aspects of plant physiology including growth and development, pest resistance, and senescence or responses to wounding. It catalyzes the hydroperoxidation of lipids containing a cis,cis-1,4-pentadiene structure. This Solanum lycopersicum (Tomato) protein is Linoleate 9S-lipoxygenase B (LOX1.2).